We begin with the raw amino-acid sequence, 216 residues long: Endo-1,4-beta-xylanase 1 (216 aa).

The first 19 residues, 1–19, serve as a signal peptide directing secretion; sequence MFLTSVVSLVVGAISCVSA. The GH11 domain maps to 29–216; that stretch reads QMTPRNSCYG…SSGSASITVS (188 aa). The active-site Nucleophile is glutamate 112. Glutamate 203 acts as the Proton donor in catalysis.

It belongs to the glycosyl hydrolase 11 (cellulase G) family.

It is found in the secreted. It carries out the reaction Endohydrolysis of (1-&gt;4)-beta-D-xylosidic linkages in xylans.. It functions in the pathway glycan degradation; xylan degradation. Its function is as follows. Endo-1,4-beta-xylanase involved in the hydrolysis of xylan, a major structural heterogeneous polysaccharide found in plant biomass representing the second most abundant polysaccharide in the biosphere, after cellulose. The chain is Endo-1,4-beta-xylanase 1 (xyl1) from Claviceps purpurea (Ergot fungus).